The primary structure comprises 332 residues: Biotin synthase (332 aa).

In terms of domain architecture, Radical SAM core spans 53–282; sequence HFGKKVKLNM…TKEIRISGGR (230 aa). Residues C71, C75, and C78 each coordinate [4Fe-4S] cluster. Positions 115, 147, 207, and 277 each coordinate [2Fe-2S] cluster.

It belongs to the radical SAM superfamily. Biotin synthase family. As to quaternary structure, homodimer. [4Fe-4S] cluster serves as cofactor. It depends on [2Fe-2S] cluster as a cofactor.

It carries out the reaction (4R,5S)-dethiobiotin + (sulfur carrier)-SH + 2 reduced [2Fe-2S]-[ferredoxin] + 2 S-adenosyl-L-methionine = (sulfur carrier)-H + biotin + 2 5'-deoxyadenosine + 2 L-methionine + 2 oxidized [2Fe-2S]-[ferredoxin]. The protein operates within cofactor biosynthesis; biotin biosynthesis; biotin from 7,8-diaminononanoate: step 2/2. Functionally, catalyzes the conversion of dethiobiotin (DTB) to biotin by the insertion of a sulfur atom into dethiobiotin via a radical-based mechanism. The chain is Biotin synthase from Bacillus cereus (strain ATCC 14579 / DSM 31 / CCUG 7414 / JCM 2152 / NBRC 15305 / NCIMB 9373 / NCTC 2599 / NRRL B-3711).